Consider the following 240-residue polypeptide: Adenylate dimethylallyltransferase (240 aa).

This sequence belongs to the isopentenyl transferase family.

It catalyses the reaction dimethylallyl diphosphate + AMP = N(6)-(dimethylallyl)adenosine 5'-phosphate + diphosphate. Its function is as follows. Transfers dimethylallyl groups to AMP as part of the biosynthesis of cytokinin phytohormones. The chain is Adenylate dimethylallyltransferase (izt) from Agrobacterium fabrum (strain C58 / ATCC 33970) (Agrobacterium tumefaciens (strain C58)).